The primary structure comprises 428 residues: Enolase (428 aa).

A (2R)-2-phosphoglycerate-binding site is contributed by Q162. The active-site Proton donor is E204. Positions 241, 286, and 313 each coordinate Mg(2+). Residues K338, R367, S368, and K389 each coordinate (2R)-2-phosphoglycerate. K338 acts as the Proton acceptor in catalysis.

This sequence belongs to the enolase family. In terms of assembly, component of the RNA degradosome, a multiprotein complex involved in RNA processing and mRNA degradation. Mg(2+) is required as a cofactor.

Its subcellular location is the cytoplasm. The protein localises to the secreted. The protein resides in the cell surface. It carries out the reaction (2R)-2-phosphoglycerate = phosphoenolpyruvate + H2O. It participates in carbohydrate degradation; glycolysis; pyruvate from D-glyceraldehyde 3-phosphate: step 4/5. Its function is as follows. Catalyzes the reversible conversion of 2-phosphoglycerate (2-PG) into phosphoenolpyruvate (PEP). It is essential for the degradation of carbohydrates via glycolysis. This chain is Enolase, found in Vesicomyosocius okutanii subsp. Calyptogena okutanii (strain HA).